A 199-amino-acid polypeptide reads, in one-letter code: Regulator of G-protein signaling 16 (199 aa).

S-palmitoyl cysteine attachment occurs at residues C2 and C12. One can recognise an RGS domain in the interval 64 to 180 (SFQSLLNSKN…LKSPAYRDLA (117 aa)). Y167 and Y176 each carry phosphotyrosine.

Interacts with GNAI1 and GNAQ. Interacts with GNAI3, GNAI3 and GNAO1. Post-translationally, palmitoylated on Cys-2 and/or Cys-12. In terms of processing, phosphorylated. Phosphorylation at Tyr-167 by EGFR enhances GTPase accelerating (GAP) activity toward GNAI1. As to expression, predominantly found in the retina. Some expression has been found in the liver.

It is found in the membrane. Its function is as follows. Regulates G protein-coupled receptor signaling cascades. Inhibits signal transduction by increasing the GTPase activity of G protein alpha subunits, thereby driving them into their inactive GDP-bound form. Plays an important role in the phototransduction cascade by regulating the lifetime and effective concentration of activated transducin alpha. May regulate extra and intracellular mitogenic signals. The polypeptide is Regulator of G-protein signaling 16 (Rgs16) (Rattus norvegicus (Rat)).